The primary structure comprises 215 residues: MSEAKRRAAEKAIEYVENDMIIGVGTGSTVAYFIDALGHTPKRIKGAVSSSEQSTAHLKQHGIEVLELNHTGTLPLYVDGADECDPYKRLIKGGGASLTREKIIAEASKQFICIIDPNKQVATLGKFPLPIEVIPMARSLVARQIMARTDGQPVWREGVITDNGNVILDVHHLCITDPVKLEQELNQIPGVVCVGLFARRCADLVIIGSEPPHIL.

Residues 26 to 29 (TGST), 79 to 82 (DGAD), and 92 to 95 (KGGG) contribute to the substrate site. E101 functions as the Proton acceptor in the catalytic mechanism. K119 is a binding site for substrate.

This sequence belongs to the ribose 5-phosphate isomerase family. Homodimer.

It catalyses the reaction aldehydo-D-ribose 5-phosphate = D-ribulose 5-phosphate. The protein operates within carbohydrate degradation; pentose phosphate pathway; D-ribose 5-phosphate from D-ribulose 5-phosphate (non-oxidative stage): step 1/1. Catalyzes the reversible conversion of ribose-5-phosphate to ribulose 5-phosphate. The polypeptide is Ribose-5-phosphate isomerase A (Xylella fastidiosa (strain Temecula1 / ATCC 700964)).